A 195-amino-acid polypeptide reads, in one-letter code: Peptide methionine sulfoxide reductase MsrA 2 (195 aa).

The active site involves C18.

Belongs to the MsrA Met sulfoxide reductase family.

It carries out the reaction L-methionyl-[protein] + [thioredoxin]-disulfide + H2O = L-methionyl-(S)-S-oxide-[protein] + [thioredoxin]-dithiol. The enzyme catalyses [thioredoxin]-disulfide + L-methionine + H2O = L-methionine (S)-S-oxide + [thioredoxin]-dithiol. Functionally, has an important function as a repair enzyme for proteins that have been inactivated by oxidation. Catalyzes the reversible oxidation-reduction of methionine sulfoxide in proteins to methionine. The sequence is that of Peptide methionine sulfoxide reductase MsrA 2 (msrA2) from Mesorhizobium japonicum (strain LMG 29417 / CECT 9101 / MAFF 303099) (Mesorhizobium loti (strain MAFF 303099)).